The sequence spans 361 residues: MDNVMAQLESLEVRYEEIQEMMADPEVIADTKRYMEITKEEADMREVVQKFRKFKADKEEIAGNKEIIADGSDPELVEMAKMENSELEDEISQLEDEIKILMLPKDPNDDKDIIMEIRGAAGGDEASLFAGDLLRMYEKYAENQGWNVSIVDSEQTEVGGYKRAAIMITGNKVYSKLKYENGAHRVQRIPVTESAGRVHTSTATVAVMPEYEQVDIDLDPKEIRVDVYRSSGAGGQHINKTSSAVRMTHLPTGIVVAMQDQRSQQQNRAKAMEILKSRVYDYYESQNRDKYDAKRKNAVGTGDRSERIRTYNYPQNRVTDHRIGLTLNKLDRIMNGELDEVIDALTVYYQTKQLEELAENA.

Q236 bears the N5-methylglutamine mark.

The protein belongs to the prokaryotic/mitochondrial release factor family. Post-translationally, methylated by PrmC. Methylation increases the termination efficiency of RF1.

It localises to the cytoplasm. In terms of biological role, peptide chain release factor 1 directs the termination of translation in response to the peptide chain termination codons UAG and UAA. This Lactobacillus delbrueckii subsp. bulgaricus (strain ATCC 11842 / DSM 20081 / BCRC 10696 / JCM 1002 / NBRC 13953 / NCIMB 11778 / NCTC 12712 / WDCM 00102 / Lb 14) protein is Peptide chain release factor 1.